The primary structure comprises 335 residues: DNA-directed RNA polymerase subunit alpha (335 aa).

The interval 1 to 231 (MVREKITVST…DLLIPFLHTK (231 aa)) is alpha N-terminal domain (alpha-NTD). Residues 263-335 (KKMALKSIFI…FVIDLPKNKF (73 aa)) form an alpha C-terminal domain (alpha-CTD) region.

The protein belongs to the RNA polymerase alpha chain family. As to quaternary structure, in plastids the minimal PEP RNA polymerase catalytic core is composed of four subunits: alpha, beta, beta', and beta''. When a (nuclear-encoded) sigma factor is associated with the core the holoenzyme is formed, which can initiate transcription.

Its subcellular location is the plastid. It is found in the chloroplast. The enzyme catalyses RNA(n) + a ribonucleoside 5'-triphosphate = RNA(n+1) + diphosphate. DNA-dependent RNA polymerase catalyzes the transcription of DNA into RNA using the four ribonucleoside triphosphates as substrates. The polypeptide is DNA-directed RNA polymerase subunit alpha (Lactuca sativa (Garden lettuce)).